A 224-amino-acid polypeptide reads, in one-letter code: Putative O-methyltransferase MUL_4520 (224 aa).

Polar residues predominate over residues 1–11 (MHGTDSSSDTP). The interval 1–20 (MHGTDSSSDTPGQPAPSRAE) is disordered. S-adenosyl-L-methionine-binding positions include Val-51, Glu-73, 75-76 (GT), Ser-81, Asp-99, and Ile-100. Asp-147 serves as a coordination point for substrate. Asp-149 is a binding site for S-adenosyl-L-methionine.

It belongs to the class I-like SAM-binding methyltransferase superfamily. Cation-dependent O-methyltransferase family.

In Mycobacterium ulcerans (strain Agy99), this protein is Putative O-methyltransferase MUL_4520.